A 429-amino-acid polypeptide reads, in one-letter code: Glucose-1-phosphate adenylyltransferase (429 aa).

Alpha-D-glucose 1-phosphate contacts are provided by residues Gly-162, 177 to 178 (EK), and Ser-209.

This sequence belongs to the bacterial/plant glucose-1-phosphate adenylyltransferase family. Homotetramer.

It carries out the reaction alpha-D-glucose 1-phosphate + ATP + H(+) = ADP-alpha-D-glucose + diphosphate. The protein operates within glycan biosynthesis; glycogen biosynthesis. Functionally, involved in the biosynthesis of ADP-glucose, a building block required for the elongation reactions to produce glycogen. Catalyzes the reaction between ATP and alpha-D-glucose 1-phosphate (G1P) to produce pyrophosphate and ADP-Glc. The protein is Glucose-1-phosphate adenylyltransferase of Nostoc punctiforme (strain ATCC 29133 / PCC 73102).